We begin with the raw amino-acid sequence, 381 residues long: 3-dehydroquinate synthase (381 aa).

NAD(+) contacts are provided by residues 81-86 (EGESSK), 115-119 (GVIGD), 139-140 (TS), Lys152, and Lys161. Zn(2+) contacts are provided by Glu194, His256, and His274.

The protein belongs to the sugar phosphate cyclases superfamily. Dehydroquinate synthase family. Co(2+) serves as cofactor. Requires Zn(2+) as cofactor. NAD(+) is required as a cofactor.

Its subcellular location is the cytoplasm. It carries out the reaction 7-phospho-2-dehydro-3-deoxy-D-arabino-heptonate = 3-dehydroquinate + phosphate. Its pathway is metabolic intermediate biosynthesis; chorismate biosynthesis; chorismate from D-erythrose 4-phosphate and phosphoenolpyruvate: step 2/7. Catalyzes the conversion of 3-deoxy-D-arabino-heptulosonate 7-phosphate (DAHP) to dehydroquinate (DHQ). This is 3-dehydroquinate synthase from Rhodopseudomonas palustris (strain TIE-1).